The sequence spans 121 residues: uncharacterized protein (121 aa).

A helical membrane pass occupies residues 9-29 (LTILIASIYIIFFVNAAPTLY). Positions 91–121 (EELPTYPPTMTTPLETTPLDTSPPVLPSAIP) are disordered. A compositionally biased stretch (low complexity) spans 98–113 (PTMTTPLETTPLDTSP).

Its subcellular location is the host membrane. This is an uncharacterized protein from Alcelaphine herpesvirus 1 (strain C500) (AlHV-1).